Here is a 172-residue protein sequence, read N- to C-terminus: Ribosome maturation factor RimM (172 aa).

Residues 95–168 (DDGEFYYHEI…RVDVEILEGL (74 aa)) enclose the PRC barrel domain.

It belongs to the RimM family. As to quaternary structure, binds ribosomal protein uS19.

Its subcellular location is the cytoplasm. In terms of biological role, an accessory protein needed during the final step in the assembly of 30S ribosomal subunit, possibly for assembly of the head region. Essential for efficient processing of 16S rRNA. May be needed both before and after RbfA during the maturation of 16S rRNA. It has affinity for free ribosomal 30S subunits but not for 70S ribosomes. The sequence is that of Ribosome maturation factor RimM from Streptococcus pneumoniae (strain P1031).